Reading from the N-terminus, the 372-residue chain is Phospho-N-acetylmuramoyl-pentapeptide-transferase (372 aa).

Helical transmembrane passes span 21–41 (SLTL…MIFG), 71–91 (TPTM…LLWA), 98–118 (VWIL…DDWL), 134–154 (YFWL…IATL), 176–196 (MIPF…YFVI), 211–231 (GLAI…AYVS), 251–271 (VIIV…FNAH), 275–295 (VFMG…IAVM), 300–320 (IAFA…MLQV), and 349–369 (QVVA…LMTL).

Belongs to the glycosyltransferase 4 family. MraY subfamily. It depends on Mg(2+) as a cofactor.

The protein resides in the cell inner membrane. It carries out the reaction UDP-N-acetyl-alpha-D-muramoyl-L-alanyl-gamma-D-glutamyl-meso-2,6-diaminopimeloyl-D-alanyl-D-alanine + di-trans,octa-cis-undecaprenyl phosphate = di-trans,octa-cis-undecaprenyl diphospho-N-acetyl-alpha-D-muramoyl-L-alanyl-D-glutamyl-meso-2,6-diaminopimeloyl-D-alanyl-D-alanine + UMP. It functions in the pathway cell wall biogenesis; peptidoglycan biosynthesis. Its function is as follows. Catalyzes the initial step of the lipid cycle reactions in the biosynthesis of the cell wall peptidoglycan: transfers peptidoglycan precursor phospho-MurNAc-pentapeptide from UDP-MurNAc-pentapeptide onto the lipid carrier undecaprenyl phosphate, yielding undecaprenyl-pyrophosphoryl-MurNAc-pentapeptide, known as lipid I. In Psychrobacter arcticus (strain DSM 17307 / VKM B-2377 / 273-4), this protein is Phospho-N-acetylmuramoyl-pentapeptide-transferase.